Reading from the N-terminus, the 97-residue chain is Aspartyl/glutamyl-tRNA(Asn/Gln) amidotransferase subunit C (97 aa).

Belongs to the GatC family. In terms of assembly, heterotrimer of A, B and C subunits.

The catalysed reaction is L-glutamyl-tRNA(Gln) + L-glutamine + ATP + H2O = L-glutaminyl-tRNA(Gln) + L-glutamate + ADP + phosphate + H(+). The enzyme catalyses L-aspartyl-tRNA(Asn) + L-glutamine + ATP + H2O = L-asparaginyl-tRNA(Asn) + L-glutamate + ADP + phosphate + 2 H(+). Its function is as follows. Allows the formation of correctly charged Asn-tRNA(Asn) or Gln-tRNA(Gln) through the transamidation of misacylated Asp-tRNA(Asn) or Glu-tRNA(Gln) in organisms which lack either or both of asparaginyl-tRNA or glutaminyl-tRNA synthetases. The reaction takes place in the presence of glutamine and ATP through an activated phospho-Asp-tRNA(Asn) or phospho-Glu-tRNA(Gln). The chain is Aspartyl/glutamyl-tRNA(Asn/Gln) amidotransferase subunit C from Prochlorococcus marinus (strain MIT 9515).